We begin with the raw amino-acid sequence, 163 residues long: Probable chemoreceptor glutamine deamidase CheD (163 aa).

This sequence belongs to the CheD family.

It catalyses the reaction L-glutaminyl-[protein] + H2O = L-glutamyl-[protein] + NH4(+). Functionally, probably deamidates glutamine residues to glutamate on methyl-accepting chemotaxis receptors (MCPs), playing an important role in chemotaxis. This chain is Probable chemoreceptor glutamine deamidase CheD, found in Pyrococcus abyssi (strain GE5 / Orsay).